The following is a 229-amino-acid chain: 2-C-methyl-D-erythritol 4-phosphate cytidylyltransferase (229 aa).

It belongs to the IspD/TarI cytidylyltransferase family. IspD subfamily.

It catalyses the reaction 2-C-methyl-D-erythritol 4-phosphate + CTP + H(+) = 4-CDP-2-C-methyl-D-erythritol + diphosphate. It participates in isoprenoid biosynthesis; isopentenyl diphosphate biosynthesis via DXP pathway; isopentenyl diphosphate from 1-deoxy-D-xylulose 5-phosphate: step 2/6. In terms of biological role, catalyzes the formation of 4-diphosphocytidyl-2-C-methyl-D-erythritol from CTP and 2-C-methyl-D-erythritol 4-phosphate (MEP). The chain is 2-C-methyl-D-erythritol 4-phosphate cytidylyltransferase from Neisseria meningitidis serogroup B (strain ATCC BAA-335 / MC58).